We begin with the raw amino-acid sequence, 445 residues long: MSVPIVETSLHYFVIYCSKLGQKEGTEHEKILFFYPPTINIGEQTNSVGISEAYVLFTKQFSPGQPCEFIHTKKSTLALLHPEEDIWMVLSVYNPTGITGKDNKREYIEDEVDDIILMKTIQQIYQTWQTFNGSIMSLASKTSYDNVRKRLESFVKPYIQQIQFDQLDLFTSLDGIKFLPLNKNVYLTIFGYINSVDLHFQSTLSSFRFGLVLYKDNLILSSLEQNETRILYNYLINMVKVGPDINSSNSMIVKNNSNNIPIWQTKGVRTGFMIQKDSLPMVWLGGKPQAMIVYEQKDTFLLFLIDPSDLPQLPFEDLSASLVQNFEFVNLTLEQHYAKKANFDEQYKYIYFNQMNLAIRSPIKPKGPELNKETMKLLNEIHADFEGGLSSEIIVKTQQDRWIVAKKIDFREFYIMFDNKNSSILEINEEVKNATTKFFKFLFTD.

This sequence belongs to the CCZ1 family.

This chain is Vacuolar fusion protein CCZ1 homolog, found in Dictyostelium discoideum (Social amoeba).